A 168-amino-acid polypeptide reads, in one-letter code: Photosystem I assembly protein Ycf3 (168 aa).

TPR repeat units lie at residues 35 to 68 (AFTY…EIDP), 72 to 105 (SYIL…NPFL), and 120 to 153 (GEQA…TPGN).

Belongs to the Ycf3 family.

The protein localises to the plastid. It is found in the chloroplast thylakoid membrane. Essential for the assembly of the photosystem I (PSI) complex. May act as a chaperone-like factor to guide the assembly of the PSI subunits. This chain is Photosystem I assembly protein Ycf3, found in Populus alba (White poplar).